We begin with the raw amino-acid sequence, 62 residues long: LTCFNDFSPTAHTVEDCQRGITTCYMKTWRVHRETVIERGCGCPKVKPGIRLKCCTGNTCNY.

Disulfide bonds link Cys-3-Cys-24, Cys-17-Cys-41, Cys-43-Cys-54, and Cys-55-Cys-60.

As to expression, expressed by the venom gland.

It is found in the secreted. Functionally, binds to muscle nicotinic acetylcholine receptor (nAChR) and inhibit acetylcholine from binding to the receptor, thereby impairing neuromuscular transmission. This is Frontoxin III from Micrurus frontalis (Coral snake).